We begin with the raw amino-acid sequence, 498 residues long: ATP synthase subunit beta, chloroplastic (498 aa).

172–179 (GGAGVGKT) is an ATP binding site.

It belongs to the ATPase alpha/beta chains family. F-type ATPases have 2 components, CF(1) - the catalytic core - and CF(0) - the membrane proton channel. CF(1) has five subunits: alpha(3), beta(3), gamma(1), delta(1), epsilon(1). CF(0) has four main subunits: a(1), b(1), b'(1) and c(9-12).

The protein localises to the plastid. It is found in the chloroplast thylakoid membrane. The enzyme catalyses ATP + H2O + 4 H(+)(in) = ADP + phosphate + 5 H(+)(out). Functionally, produces ATP from ADP in the presence of a proton gradient across the membrane. The catalytic sites are hosted primarily by the beta subunits. This chain is ATP synthase subunit beta, chloroplastic, found in Helianthus annuus (Common sunflower).